The sequence spans 330 residues: Ketol-acid reductoisomerase (NADP(+)) (330 aa).

The 180-residue stretch at 2–181 (MEKYHETDAD…GATRAVVLET (180 aa)) folds into the KARI N-terminal Rossmann domain. NADP(+) contacts are provided by residues 25-28 (YGSQ), Arg-48, Ser-52, and 82-85 (DENQ). His-107 is a catalytic residue. Gly-133 contributes to the NADP(+) binding site. Residues 182–327 (TFREETETDL…SELRAMMPQF (146 aa)) enclose the KARI C-terminal knotted domain. Asp-190, Glu-194, Glu-226, and Glu-230 together coordinate Mg(2+). A substrate-binding site is contributed by Ser-251.

This sequence belongs to the ketol-acid reductoisomerase family. Requires Mg(2+) as cofactor.

The enzyme catalyses (2R)-2,3-dihydroxy-3-methylbutanoate + NADP(+) = (2S)-2-acetolactate + NADPH + H(+). It carries out the reaction (2R,3R)-2,3-dihydroxy-3-methylpentanoate + NADP(+) = (S)-2-ethyl-2-hydroxy-3-oxobutanoate + NADPH + H(+). Its pathway is amino-acid biosynthesis; L-isoleucine biosynthesis; L-isoleucine from 2-oxobutanoate: step 2/4. The protein operates within amino-acid biosynthesis; L-valine biosynthesis; L-valine from pyruvate: step 2/4. Its function is as follows. Involved in the biosynthesis of branched-chain amino acids (BCAA). Catalyzes an alkyl-migration followed by a ketol-acid reduction of (S)-2-acetolactate (S2AL) to yield (R)-2,3-dihydroxy-isovalerate. In the isomerase reaction, S2AL is rearranged via a Mg-dependent methyl migration to produce 3-hydroxy-3-methyl-2-ketobutyrate (HMKB). In the reductase reaction, this 2-ketoacid undergoes a metal-dependent reduction by NADPH to yield (R)-2,3-dihydroxy-isovalerate. This is Ketol-acid reductoisomerase (NADP(+)) from Methanocorpusculum labreanum (strain ATCC 43576 / DSM 4855 / Z).